The chain runs to 342 residues: Phosphate acyltransferase (342 aa).

This sequence belongs to the PlsX family. As to quaternary structure, homodimer. Probably interacts with PlsY.

It localises to the cytoplasm. It carries out the reaction a fatty acyl-[ACP] + phosphate = an acyl phosphate + holo-[ACP]. The protein operates within lipid metabolism; phospholipid metabolism. In terms of biological role, catalyzes the reversible formation of acyl-phosphate (acyl-PO(4)) from acyl-[acyl-carrier-protein] (acyl-ACP). This enzyme utilizes acyl-ACP as fatty acyl donor, but not acyl-CoA. This chain is Phosphate acyltransferase, found in Actinobacillus succinogenes (strain ATCC 55618 / DSM 22257 / CCUG 43843 / 130Z).